Consider the following 117-residue polypeptide: UPF0295 protein YgzB (117 aa).

2 helical membrane-spanning segments follow: residues T13–K33 and L41–G61.

The protein belongs to the UPF0295 family.

The protein resides in the cell membrane. The chain is UPF0295 protein YgzB (ygzB) from Bacillus subtilis (strain 168).